Here is a 290-residue protein sequence, read N- to C-terminus: Putative phosphatase MPN_427 (290 aa).

Catalysis depends on D16, which acts as the Nucleophile. A Mg(2+)-binding site is contributed by D16. Residue L17 participates in phosphate binding. D18 is a binding site for Mg(2+). Phosphate contacts are provided by residues 53 to 54 (TG) and K216. Mg(2+)-binding residues include D239 and S240. N242 contributes to the phosphate binding site.

This sequence belongs to the HAD-like hydrolase superfamily. Cof family. It depends on Mg(2+) as a cofactor.

The sequence is that of Putative phosphatase MPN_427 from Mycoplasma pneumoniae (strain ATCC 29342 / M129 / Subtype 1) (Mycoplasmoides pneumoniae).